The chain runs to 858 residues: Tetratricopeptide repeat protein 7A (858 aa).

Residue Ser51 is modified to Phosphoserine. TPR repeat units lie at residues 121–157 (CEAM…MENK), 177–210 (ERLP…AQVF), 414–447 (FHLW…RPSD), 497–531 (YSLQ…APSD), 533–565 (QVIL…RKDD), and 566–599 (AHAL…HPEN). Ser182 is subject to Phosphoserine. Phosphoserine is present on residues Ser647, Ser678, Ser679, and Ser690. Thr693 is subject to Phosphothreonine. TPR repeat units lie at residues 745 to 778 (HSVL…NPDG), 780 to 812 (RIMH…QSTC), and 813 to 846 (HEAW…EASS).

In terms of assembly, component of a phosphatidylinositol 4-kinase (PI4K) complex, composed of PI4KA, EFR3 (EFR3A or EFR3B), TTC7 (TTC7A or TTC7B) and HYCC (HYCC1 or HYCC2). Interacts with PI4KA. Interaction with PI4KA is direct. Interacts with EFR3 (EFR3A or EFR3B), interaction is direct. Interacts with HYCC (HYCC1 or HYCC2), interaction is direct. Association with the PI4K complex is strongly reduced by TMEM150A. As to expression, expressed in epithelial cells of the intestine, thymus, and pancreas (at protein level).

It localises to the cytoplasm. The protein localises to the cell membrane. Its function is as follows. Component of a complex required to localize phosphatidylinositol 4-kinase (PI4K) to the plasma membrane. The complex acts as a regulator of phosphatidylinositol 4-phosphate (PtdIns(4)P) synthesis. In the complex, plays a central role in bridging PI4KA to EFR3B and HYCC1, via direct interactions. In Homo sapiens (Human), this protein is Tetratricopeptide repeat protein 7A.